The chain runs to 260 residues: NH(3)-dependent NAD(+) synthetase (260 aa).

Residue Gly31–Ser38 coordinates ATP. Asp37 lines the Mg(2+) pocket. Position 112 (Arg112) interacts with deamido-NAD(+). Thr132 contacts ATP. Residue Glu137 participates in Mg(2+) binding. Positions 161 and 183 each coordinate ATP.

It belongs to the NAD synthetase family. Homodimer.

The catalysed reaction is deamido-NAD(+) + NH4(+) + ATP = AMP + diphosphate + NAD(+) + H(+). The protein operates within cofactor biosynthesis; NAD(+) biosynthesis; NAD(+) from deamido-NAD(+) (ammonia route): step 1/1. Its function is as follows. Catalyzes the ATP-dependent amidation of deamido-NAD to form NAD. Uses ammonia as a nitrogen source. The polypeptide is NH(3)-dependent NAD(+) synthetase (Helicobacter acinonychis (strain Sheeba)).